We begin with the raw amino-acid sequence, 194 residues long: Peptidyl-tRNA hydrolase (194 aa).

Tyr-16 lines the tRNA pocket. The Proton acceptor role is filled by His-21. Residues Phe-67, Asn-69, and Asn-115 each contribute to the tRNA site.

This sequence belongs to the PTH family. As to quaternary structure, monomer.

The protein localises to the cytoplasm. It catalyses the reaction an N-acyl-L-alpha-aminoacyl-tRNA + H2O = an N-acyl-L-amino acid + a tRNA + H(+). Its function is as follows. Hydrolyzes ribosome-free peptidyl-tRNAs (with 1 or more amino acids incorporated), which drop off the ribosome during protein synthesis, or as a result of ribosome stalling. Catalyzes the release of premature peptidyl moieties from peptidyl-tRNA molecules trapped in stalled 50S ribosomal subunits, and thus maintains levels of free tRNAs and 50S ribosomes. This chain is Peptidyl-tRNA hydrolase, found in Shigella boydii serotype 18 (strain CDC 3083-94 / BS512).